The primary structure comprises 461 residues: Cyclic 2,3-diphosphoglycerate synthetase (461 aa).

The protein belongs to the cyclic 2,3-diphosphoglycerate synthetase family.

It is found in the cytoplasm. The catalysed reaction is (2R)-2,3-bisphosphoglycerate + ATP + H(+) = cyclic (2R)-2,3-bisphosphoglycerate + ADP + phosphate. Functionally, catalyzes the formation of cyclic 2,3-diphosphoglycerate (cDPG) by formation of an intramolecular phosphoanhydride bond at the expense of ATP. The sequence is that of Cyclic 2,3-diphosphoglycerate synthetase from Methanosphaera stadtmanae (strain ATCC 43021 / DSM 3091 / JCM 11832 / MCB-3).